Reading from the N-terminus, the 324-residue chain is Quinolinate synthase 2 (324 aa).

Iminosuccinate-binding residues include H48 and S66. Residue C111 participates in [4Fe-4S] cluster binding. Residues 137 to 139 and S154 each bind iminosuccinate; that span reads YVN. Position 196 (C196) interacts with [4Fe-4S] cluster. Iminosuccinate contacts are provided by residues 222-224 and T239; that span reads HPE. C282 contacts [4Fe-4S] cluster.

It belongs to the quinolinate synthase family. Type 2 subfamily. [4Fe-4S] cluster is required as a cofactor.

The protein localises to the cytoplasm. It catalyses the reaction iminosuccinate + dihydroxyacetone phosphate = quinolinate + phosphate + 2 H2O + H(+). It functions in the pathway cofactor biosynthesis; NAD(+) biosynthesis; quinolinate from iminoaspartate: step 1/1. In terms of biological role, catalyzes the condensation of iminoaspartate with dihydroxyacetone phosphate to form quinolinate. The polypeptide is Quinolinate synthase 2 (Mesorhizobium japonicum (strain LMG 29417 / CECT 9101 / MAFF 303099) (Mesorhizobium loti (strain MAFF 303099))).